The primary structure comprises 265 residues: 2-Cys peroxiredoxin BAS1, chloroplastic (265 aa).

The transit peptide at 1–65 (MACVASSTTL…SSTSRRSFAV (65 aa)) directs the protein to the chloroplast. The region spanning 73-232 (PLVGNKAPDF…TMRTLQALQY (160 aa)) is the Thioredoxin domain. Catalysis depends on C119, which acts as the Cysteine sulfenic acid (-SOH) intermediate.

It belongs to the peroxiredoxin family. AhpC/Prx1 subfamily. In terms of assembly, homodimer; disulfide-linked, upon oxidation.

It is found in the plastid. The protein resides in the chloroplast. The enzyme catalyses a hydroperoxide + [thioredoxin]-dithiol = an alcohol + [thioredoxin]-disulfide + H2O. Thiol-specific peroxidase that catalyzes the reduction of hydrogen peroxide and organic hydroperoxides to water and alcohols, respectively. Plays a role in cell protection against oxidative stress by detoxifying peroxides. May be an antioxidant enzyme particularly in the developing shoot and photosynthesizing leaf. This Spinacia oleracea (Spinach) protein is 2-Cys peroxiredoxin BAS1, chloroplastic (BAS1).